Consider the following 406-residue polypeptide: Renin (406 aa).

The N-terminal stretch at 1-23 is a signal peptide; it reads MDGWRRMPRWGLLLLLWGSCTFG. Positions 24-66 are cleaved as a propeptide — activation peptide; the sequence is LPTDTTTFKRIFLKRMPSIRESLKERGVDMARLGPEWSQPMKR. Asn71 carries an N-linked (GlcNAc...) asparagine glycan. A Peptidase A1 domain is found at 86–403; the sequence is YYGEIGIGTP…DRRNNRIGFA (318 aa). Asp104 is a catalytic residue. An intrachain disulfide couples Cys117 to Cys124. A glycan (N-linked (GlcNAc...) asparagine) is linked at Asn141. Cys283 and Cys287 are disulfide-bonded. The active site involves Asp292. A disulfide bond links Cys325 and Cys362.

It belongs to the peptidase A1 family. As to quaternary structure, interacts with ATP6AP2.

It is found in the secreted. Its subcellular location is the membrane. It catalyses the reaction Cleavage of Leu-|-Xaa bond in angiotensinogen to generate angiotensin I.. Its activity is regulated as follows. Interaction with ATP6AP2 results in a 5-fold increased efficiency in angiotensinogen processing. Its function is as follows. Renin is a highly specific endopeptidase, whose only known function is to generate angiotensin I from angiotensinogen in the plasma, initiating a cascade of reactions that produce an elevation of blood pressure and increased sodium retention by the kidney. The sequence is that of Renin (REN) from Macaca mulatta (Rhesus macaque).